We begin with the raw amino-acid sequence, 446 residues long: Putrescine N-hydroxylase (446 aa).

Phenylalanine 17, aspartate 37, serine 38, lysine 39, tryptophan 44, and histidine 45 together coordinate FAD. NADP(+) contacts are provided by threonine 54, glutamine 56, and arginine 98. Glutamine 56 provides a ligand contact to FAD. Residue valine 121 coordinates FAD. NADP(+)-binding residues include serine 199, lysine 223, tyrosine 267, and leucine 301. Asparagine 378, proline 389, and leucine 391 together coordinate FAD.

Belongs to the lysine N(6)-hydroxylase/L-ornithine N(5)-oxygenase family. In terms of assembly, homotetramer. The cofactor is FAD.

It carries out the reaction putrescine + NADPH + O2 = N-hydroxyputrescine + NADP(+) + H2O. The protein operates within siderophore biosynthesis. Its function is as follows. N-hydroxylating monooxygenase involved in the biosynthesis of fimsbactin A, the major siderophore produced by A.baumannii. Catalyzes the N-hydroxylation of the aliphatic diamine putrescine into N-hydroxyputrescine (NHP). Putrescine is the preferred substrate, but the enzyme can also catalyze the N-hydroxylation of cadaverine, with 4-fold lower catalytic efficiency. Cannot use lysine or ornithine as substrates. Uses both NADPH and NADH as the reducing cofactor with a preference for NADPH. In Acinetobacter baumannii (strain ATCC 17978 / DSM 105126 / CIP 53.77 / LMG 1025 / NCDC KC755 / 5377), this protein is Putrescine N-hydroxylase.